The following is a 303-amino-acid chain: Recombination-associated protein RdgC (303 aa).

The protein belongs to the RdgC family.

The protein localises to the cytoplasm. The protein resides in the nucleoid. Its function is as follows. May be involved in recombination. In Pseudoalteromonas translucida (strain TAC 125), this protein is Recombination-associated protein RdgC.